The chain runs to 316 residues: Olfactory receptor 2AG1 (316 aa).

At 1 to 25 the chain is on the extracellular side; that stretch reads MELWNFTLGSGFILVGILNDSGSPE. N-linked (GlcNAc...) asparagine glycosylation is found at N5 and N19. Residues 26-49 form a helical membrane-spanning segment; it reads LLCATITILYLLALISNGLLLLAI. The Cytoplasmic portion of the chain corresponds to 50 to 57; that stretch reads TMEARLHM. Residues 58 to 79 traverse the membrane as a helical segment; that stretch reads PMYLLLGQLSLMDLLFTSVVTP. At 80–100 the chain is on the extracellular side; sequence KALADFLRRENTISFGGCALQ. C97 and C189 are oxidised to a cystine. A helical membrane pass occupies residues 101-120; that stretch reads MFLALTMGGAEDLLLAFMAY. Residues 121–139 are Cytoplasmic-facing; it reads DRYVAICHPLTYMTLMSSR. Residues 140 to 158 traverse the membrane as a helical segment; it reads ACWLMVATSWILASLSALI. The Extracellular portion of the chain corresponds to 159–195; sequence YTVYTMHYPFCRAQEIRHLLCEIPHLLKVACADTSRY. The chain crosses the membrane as a helical span at residues 196–219; it reads ELMVYVMGVTFLIPSLAAILASYT. Residues 220–236 are Cytoplasmic-facing; sequence QILLTVLHMPSNEGRKK. Residues 237 to 259 form a helical membrane-spanning segment; that stretch reads ALVTCSSHLTVVGMFYGAATFMY. Residues 260-272 are Extracellular-facing; the sequence is VLPSSFHSTRQDN. The helical transmembrane segment at 273 to 292 threads the bilayer; sequence IISVFYTIVTPALNPLIYSL. Residues 293–316 lie on the Cytoplasmic side of the membrane; the sequence is RNKEVMRALRRVLGKYMLPAHSTL.

Belongs to the G-protein coupled receptor 1 family.

The protein localises to the cell membrane. Functionally, odorant receptor. This chain is Olfactory receptor 2AG1 (OR2AG1), found in Homo sapiens (Human).